The primary structure comprises 379 residues: Fructose-1,6-bisphosphate aldolase/phosphatase (379 aa).

Residue Asp-13 is the Proton acceptor; for FBP phosphatase activity of the active site. Mg(2+) contacts are provided by Asp-13, His-20, Asp-51, and Asp-52. Beta-D-fructose 1,6-bisphosphate is bound at residue His-20. Residue His-20 coordinates dihydroxyacetone phosphate. Tyr-89 is a binding site for beta-D-fructose 1,6-bisphosphate. Gln-93 contributes to the Mg(2+) binding site. Residue 102–103 participates in beta-D-fructose 1,6-bisphosphate binding; sequence GN. Residue Asp-130 coordinates Mg(2+). Residue Lys-131 participates in beta-D-fructose 1,6-bisphosphate binding. Lys-131 serves as a coordination point for dihydroxyacetone phosphate. Residue Tyr-227 is the Proton donor/acceptor; for FBP aldolase activity of the active site. Mg(2+) contacts are provided by Lys-230, Asp-231, and Asp-232. Residue Lys-230 is the Schiff-base intermediate with DHAP; for FBP aldolase activity of the active site. Beta-D-fructose 1,6-bisphosphate contacts are provided by residues 240–241, Arg-264, Asp-285, and Tyr-346; that span reads QS. 2 residues coordinate dihydroxyacetone phosphate: Arg-264 and Asp-285.

Belongs to the FBP aldolase/phosphatase family. In terms of assembly, homooctamer; dimer of tetramers. Mg(2+) is required as a cofactor.

It catalyses the reaction beta-D-fructose 1,6-bisphosphate + H2O = beta-D-fructose 6-phosphate + phosphate. It carries out the reaction beta-D-fructose 1,6-bisphosphate = D-glyceraldehyde 3-phosphate + dihydroxyacetone phosphate. Its pathway is carbohydrate biosynthesis; gluconeogenesis. Functionally, catalyzes two subsequent steps in gluconeogenesis: the aldol condensation of dihydroxyacetone phosphate (DHAP) and glyceraldehyde-3-phosphate (GA3P) to fructose-1,6-bisphosphate (FBP), and the dephosphorylation of FBP to fructose-6-phosphate (F6P). This Moorella thermoacetica (strain ATCC 39073 / JCM 9320) protein is Fructose-1,6-bisphosphate aldolase/phosphatase.